Consider the following 115-residue polypeptide: MARVKRGNVARKRRNKILRLARGFRGSNGTLFRTANQRVMKALCNAYRDRRRRKRDFRRLWIARINAAARMNGVSYSRLIGGLKKADVRINRKMLAQMAVVDPASFANVVNATQG.

This sequence belongs to the bacterial ribosomal protein bL20 family.

In terms of biological role, binds directly to 23S ribosomal RNA and is necessary for the in vitro assembly process of the 50S ribosomal subunit. It is not involved in the protein synthesizing functions of that subunit. The polypeptide is Large ribosomal subunit protein bL20 (Synechococcus sp. (strain CC9311)).